We begin with the raw amino-acid sequence, 412 residues long: ATP phosphoribosyltransferase regulatory subunit (412 aa).

It belongs to the class-II aminoacyl-tRNA synthetase family. HisZ subfamily. Heteromultimer composed of HisG and HisZ subunits.

The protein localises to the cytoplasm. The protein operates within amino-acid biosynthesis; L-histidine biosynthesis; L-histidine from 5-phospho-alpha-D-ribose 1-diphosphate: step 1/9. In terms of biological role, required for the first step of histidine biosynthesis. May allow the feedback regulation of ATP phosphoribosyltransferase activity by histidine. The chain is ATP phosphoribosyltransferase regulatory subunit from Dehalococcoides mccartyi (strain ATCC BAA-2100 / JCM 16839 / KCTC 5957 / BAV1).